The chain runs to 357 residues: Phenylalanine--tRNA ligase alpha subunit (357 aa).

Residue Glu257 coordinates Mg(2+).

This sequence belongs to the class-II aminoacyl-tRNA synthetase family. Phe-tRNA synthetase alpha subunit type 1 subfamily. In terms of assembly, tetramer of two alpha and two beta subunits. The cofactor is Mg(2+).

It is found in the cytoplasm. The catalysed reaction is tRNA(Phe) + L-phenylalanine + ATP = L-phenylalanyl-tRNA(Phe) + AMP + diphosphate + H(+). This chain is Phenylalanine--tRNA ligase alpha subunit, found in Roseobacter denitrificans (strain ATCC 33942 / OCh 114) (Erythrobacter sp. (strain OCh 114)).